Here is a 228-residue protein sequence, read N- to C-terminus: 5'-methylthioadenosine/S-adenosylhomocysteine nucleosidase (228 aa).

Glu11 serves as the catalytic Proton acceptor. Residues Gly77, Ile151, and 172–173 contribute to the substrate site; that span reads ME. Asp196 serves as the catalytic Proton donor.

This sequence belongs to the PNP/UDP phosphorylase family. MtnN subfamily.

It carries out the reaction S-adenosyl-L-homocysteine + H2O = S-(5-deoxy-D-ribos-5-yl)-L-homocysteine + adenine. The catalysed reaction is S-methyl-5'-thioadenosine + H2O = 5-(methylsulfanyl)-D-ribose + adenine. It catalyses the reaction 5'-deoxyadenosine + H2O = 5-deoxy-D-ribose + adenine. Its pathway is amino-acid biosynthesis; L-methionine biosynthesis via salvage pathway; S-methyl-5-thio-alpha-D-ribose 1-phosphate from S-methyl-5'-thioadenosine (hydrolase route): step 1/2. Its function is as follows. Catalyzes the irreversible cleavage of the glycosidic bond in both 5'-methylthioadenosine (MTA) and S-adenosylhomocysteine (SAH/AdoHcy) to adenine and the corresponding thioribose, 5'-methylthioribose and S-ribosylhomocysteine, respectively. Also cleaves 5'-deoxyadenosine, a toxic by-product of radical S-adenosylmethionine (SAM) enzymes, into 5-deoxyribose and adenine. In Staphylococcus saprophyticus subsp. saprophyticus (strain ATCC 15305 / DSM 20229 / NCIMB 8711 / NCTC 7292 / S-41), this protein is 5'-methylthioadenosine/S-adenosylhomocysteine nucleosidase.